The primary structure comprises 219 residues: Phosphatidylserine decarboxylase proenzyme (219 aa).

Residue Ser-188 is the Schiff-base intermediate with substrate; via pyruvic acid of the active site. Pyruvic acid (Ser); by autocatalysis is present on Ser-188.

This sequence belongs to the phosphatidylserine decarboxylase family. PSD-A subfamily. Heterodimer of a large membrane-associated beta subunit and a small pyruvoyl-containing alpha subunit. Pyruvate is required as a cofactor. Is synthesized initially as an inactive proenzyme. Formation of the active enzyme involves a self-maturation process in which the active site pyruvoyl group is generated from an internal serine residue via an autocatalytic post-translational modification. Two non-identical subunits are generated from the proenzyme in this reaction, and the pyruvate is formed at the N-terminus of the alpha chain, which is derived from the carboxyl end of the proenzyme. The post-translation cleavage follows an unusual pathway, termed non-hydrolytic serinolysis, in which the side chain hydroxyl group of the serine supplies its oxygen atom to form the C-terminus of the beta chain, while the remainder of the serine residue undergoes an oxidative deamination to produce ammonia and the pyruvoyl prosthetic group on the alpha chain.

It is found in the cell membrane. The enzyme catalyses a 1,2-diacyl-sn-glycero-3-phospho-L-serine + H(+) = a 1,2-diacyl-sn-glycero-3-phosphoethanolamine + CO2. It functions in the pathway phospholipid metabolism; phosphatidylethanolamine biosynthesis; phosphatidylethanolamine from CDP-diacylglycerol: step 2/2. Its function is as follows. Catalyzes the formation of phosphatidylethanolamine (PtdEtn) from phosphatidylserine (PtdSer). This Ruegeria pomeroyi (strain ATCC 700808 / DSM 15171 / DSS-3) (Silicibacter pomeroyi) protein is Phosphatidylserine decarboxylase proenzyme.